Here is a 495-residue protein sequence, read N- to C-terminus: Cobyric acid synthase (495 aa).

In terms of domain architecture, GATase cobBQ-type spans 258–427; it reads GLRVAAVRLP…WHGLFDNDGF (170 aa). The active-site Nucleophile is the Cys-339. The active site involves His-419.

It belongs to the CobB/CobQ family. CobQ subfamily.

Its pathway is cofactor biosynthesis; adenosylcobalamin biosynthesis. In terms of biological role, catalyzes amidations at positions B, D, E, and G on adenosylcobyrinic A,C-diamide. NH(2) groups are provided by glutamine, and one molecule of ATP is hydrogenolyzed for each amidation. The polypeptide is Cobyric acid synthase (Mycobacterium sp. (strain KMS)).